Consider the following 30-residue polypeptide: Varv peptide H (30 aa).

Positions 1 to 30 (GLPVCGETCFGGTCNTPGCSCETWPVCSRN) form a cross-link, cyclopeptide (Gly-Asn). 3 disulfides stabilise this stretch: Cys-5–Cys-19, Cys-9–Cys-21, and Cys-14–Cys-27.

Post-translationally, this is a cyclic peptide.

Its function is as follows. Probably participates in a plant defense mechanism. The polypeptide is Varv peptide H (Viola arvensis (European field pansy)).